The primary structure comprises 152 residues: Large ribosomal subunit protein bL9 (152 aa).

This sequence belongs to the bacterial ribosomal protein bL9 family.

Functionally, binds to the 23S rRNA. The polypeptide is Large ribosomal subunit protein bL9 (Pelagibacter ubique (strain HTCC1062)).